The chain runs to 333 residues: Ferrochelatase (333 aa).

Fe cation-binding residues include His202 and Glu284.

Belongs to the ferrochelatase family.

It localises to the cytoplasm. The enzyme catalyses heme b + 2 H(+) = protoporphyrin IX + Fe(2+). It participates in porphyrin-containing compound metabolism; protoheme biosynthesis; protoheme from protoporphyrin-IX: step 1/1. Functionally, catalyzes the ferrous insertion into protoporphyrin IX. The polypeptide is Ferrochelatase (Francisella tularensis subsp. novicida (strain U112)).